Reading from the N-terminus, the 162-residue chain is Small ribosomal subunit protein uS12m (162 aa).

Residues 1-37 (MIRFAQYARYPVISRLMKPTVISPFQAQAFSSSSVML) constitute a mitochondrion transit peptide.

This sequence belongs to the universal ribosomal protein uS12 family. As to quaternary structure, component of the mitochondrial small ribosomal subunit (mt-SSU). Mature yeast 74S mitochondrial ribosomes consist of a small (37S) and a large (54S) subunit. The 37S small subunit contains a 15S ribosomal RNA (15S mt-rRNA) and at least 32 different proteins. The 54S large subunit contains a 21S rRNA (21S mt-rRNA) and at least 45 different proteins. uS12m forms part of the decoding center of the mt-SSU.

The protein localises to the mitochondrion. Its function is as follows. Component of the mitochondrial ribosome (mitoribosome), a dedicated translation machinery responsible for the synthesis of mitochondrial genome-encoded proteins, including at least some of the essential transmembrane subunits of the mitochondrial respiratory chain. The mitoribosomes are attached to the mitochondrial inner membrane and translation products are cotranslationally integrated into the membrane. uS12m is required for respiratory growth. The sequence is that of Small ribosomal subunit protein uS12m from Schizosaccharomyces pombe (strain 972 / ATCC 24843) (Fission yeast).